Here is a 303-residue protein sequence, read N- to C-terminus: Thioesterase poxG (303 aa).

The protein belongs to the lcsJ thioesterase family.

It functions in the pathway secondary metabolite biosynthesis. Its function is as follows. Thioesterase; part of the gene cluster that mediates the biosynthesis of oxaleimides, cytotoxic compounds containing an unusual disubstituted succinimide moiety. The first step of the pathway is provided by the HR-PKS poxF that serves in a new mode of collaborative biosynthesis with the PKS-NRPS poxE, by providing the olefin containing amino acid substrate via the synthesis of an ACP-bound dec-4-enoate. The cytochrome P450 monooxygenase poxM-catalyzed oxidation at the alpha-position creates the enzyme-bound 2-hydroxydec-4-enoyl-ACP thioester, which may be prone to spontaneous hydrolysis to yield 2-hydroxydec-4-enoic acid due to increased electrophilicity of the carbonyl. 2-hydroxydec-4-enoic acid can then be further oxidized by poxM to yield the alpha-ketoacid 2-oxodec-4-enoicacid, which is reductively aminated by the aminotransferase poxL to yield (S,E)-2-aminodec-4-enoic acid. The Hybrid PKS-NRPS synthetase poxE then performs condensation between the octaketide product of its PKS modules and the amino group of (S,E)-2-aminodec-4-enoic acid which is activated and incorporated by the adenylation domain. The resulting aminoacyl product can be cyclized by the Diels-Alderase PoxQ and reductively released by the reductive (R) domain of poxE to yield an aldehyde intermediate. The released aldehyde is then substrate for a Knoevenagel condensation by the hydrolyase poxO followed by an oxidation at the 5-position of the pyrrolidone ring. The presence of the olefin from the amino acid building block allows for migration of the substituted allyl group to occur. This allylic transposition reaction takes place in a conjugate addition, semipinacol-like fashion to yield a succinimide intermediate. Iterative two-electron oxidations of the C7 methyl of the succinimide intermediate to the carboxylic acid can be catalyzed by one of two remaining cytochrome P450 monooxygenasess poxC or poxD to yield oxaleimide A. Subsequent oxidation yields the maleimide scaffold oxaleimide I. Both oxaleimide A and oxaleimide I can undergo oxidative modifications in the decalin ring to yield the series of products oxaleimides B to H. The sequence is that of Thioesterase poxG from Penicillium oxalicum.